Reading from the N-terminus, the 158-residue chain is Large ribosomal subunit protein uL15 (158 aa).

2 disordered regions span residues 1-53 and 138-158; these read MRIH…FEGG and ESAGGSCQDLSDTSNAPSNNE. Over residues 23-35 the composition is skewed to gly residues; it reads ISAGQGASGGFGM. The segment covering 145 to 158 has biased composition (polar residues); sequence QDLSDTSNAPSNNE.

This sequence belongs to the universal ribosomal protein uL15 family. As to quaternary structure, part of the 50S ribosomal subunit.

Its function is as follows. Binds to the 23S rRNA. The sequence is that of Large ribosomal subunit protein uL15 from Crocosphaera subtropica (strain ATCC 51142 / BH68) (Cyanothece sp. (strain ATCC 51142)).